The chain runs to 187 residues: NADH-quinone oxidoreductase subunit B (187 aa).

The [4Fe-4S] cluster site is built by cysteine 55, cysteine 56, cysteine 121, and cysteine 150.

This sequence belongs to the complex I 20 kDa subunit family. As to quaternary structure, NDH-1 is composed of 14 different subunits. Subunits NuoB, C, D, E, F, and G constitute the peripheral sector of the complex. The cofactor is [4Fe-4S] cluster.

The protein localises to the cell inner membrane. The catalysed reaction is a quinone + NADH + 5 H(+)(in) = a quinol + NAD(+) + 4 H(+)(out). In terms of biological role, NDH-1 shuttles electrons from NADH, via FMN and iron-sulfur (Fe-S) centers, to quinones in the respiratory chain. The immediate electron acceptor for the enzyme in this species is believed to be ubiquinone. Couples the redox reaction to proton translocation (for every two electrons transferred, four hydrogen ions are translocated across the cytoplasmic membrane), and thus conserves the redox energy in a proton gradient. The chain is NADH-quinone oxidoreductase subunit B from Bdellovibrio bacteriovorus (strain ATCC 15356 / DSM 50701 / NCIMB 9529 / HD100).